A 779-amino-acid polypeptide reads, in one-letter code: MDSSIHLSGLLSRHDDDATRTSTSEGLEEGEVEGETLLIVESEDQASVDLSHDQSGDSLNSDEGDVSWMEEQLSYFCDKCQKWIPASQLREQLSYLKGDNFFRFTCCDCSADGKEQYERLKLTWQQVVMLAMYNLSLEGSGRQGYFRWKEDICAFIEKHWTFLLGNRKKTSTWWSTVAGCLSVGSPVYFRSGAQEFGEPGWWKLVHNRPPTMRPEGEKLAASTLKVKASKPTLDPIITVEGLRKRASRNPVESAMELKEKRSRTQEAKDIRRAQKEAAGLLDRSTSSTPVKFISRGRRPDLILEKGEVIDFSSLSSSDRTPLTSPSPSPSLDFSAPGTPASHSATPSLLSEADLIPDVMPPQALFHDDDELEGDGVIDPGMEYIPPPAGSASGLLGSRKKVRAPEQIKQEVDSEEEKPDRMDGDSEDTDSNISLHTRAREKRKPPLEKDMKPKGPRYTPVSIYEEKLLLKRLEACPGAVAMTPEARRLKRKLIVRQAKRDRGLPLFDLDEVVNAALLLVDGIYGAKDGGASRLAAGQATYRTTCQDFRILDRYQTALPARKGFRHQTTRFLYRLVGSEDLAVDQSIISPYTSRILKPYIRRDYETKPPKLQLLSQIRSHLHRSDPHWTPGPDAPLDYCYVRPNHIPTINSMCQEFFWPGIDLSECLQYPDFSVVVLYKKVIVAFGFMVPDVKYNEAYISFLLVHPEWRRAGIATFMIYHLIQTCMGKDVTLHVSASNPAMLLYQKFGFKTEEYVLDFYDKYYPLESTECKHAFFLRLRR.

A disordered region spans residues 1–34; the sequence is MDSSIHLSGLLSRHDDDATRTSTSEGLEEGEVEG. Residue S4 is modified to Phosphoserine. Residue K230 is modified to N6-acetyllysine. Disordered regions lie at residues 247 to 292, 314 to 345, and 360 to 457; these read SRNP…PVKF, LSSSDRTPLTSPSPSPSLDFSAPGTPASHSAT, and PPQA…GPRY. Residues 255–275 show a composition bias toward basic and acidic residues; it reads MELKEKRSRTQEAKDIRRAQK. The residue at position 284 (S284) is a Phosphoserine. N6-acetyllysine is present on K291. The segment covering 314 to 334 has biased composition (low complexity); the sequence is LSSSDRTPLTSPSPSPSLDFS. Composition is skewed to basic and acidic residues over residues 402-423 and 443-452; these read RAPEQIKQEVDSEEEKPDRMDG and KPPLEKDMKP. S413 carries the post-translational modification Phosphoserine. The N-acetyltransferase domain maps to 635-779; the sequence is LDYCYVRPNH…KHAFFLRLRR (145 aa).

As to quaternary structure, interacts with the LIM 1 domain of CSRP2. Component of the ADA2A-containing complex (ATAC), composed of CSRP2BP, KAT2A, TADA2L, TADA3L, ZZ3, MBIP, WDR5, YEATS2, CCDC101 and DR1. In the complex, it probably interacts directly with KAT2A, MBIP and WDR5.

It localises to the nucleus. The protein localises to the cytoplasm. Component of the ATAC complex, a complex with histone acetyltransferase activity on histones H3 and H4. May function as a scaffold for the ATAC complex to promote ATAC complex stability. Has also weak histone acetyltransferase activity toward histone H4. Required for the normal progression through G1 and G2/M phases of the cell cycle. This Mus musculus (Mouse) protein is Cysteine-rich protein 2-binding protein.